Reading from the N-terminus, the 353-residue chain is MTAILERREASSLWARFCEWVTSTENRLYVGWFGVIMIPTLLTAVSVFIIAFVAAPPVDIDGIREPVSGSLLYGNNIISGAIIPTSNAIGLHFYPIWEAASVDEWLYNGGPYQLIVCHFFLGICCYMGREWELSFRLGMRPWIAVAYSAPVAAATAVFIIYPIGQGSFSDGMPLGISGTFNFMIVFQAEHNILMHPFHMLGVAGVFGGSLFSAMHGSLVTSSLIRETTENESTNAGYKFGQEEETYNIVAAHGYFGRLIFQYASFNNSRSLHFFLAAWPVVGIWFTALGISTMAFNLNGFNFNQSIVDSQGRVLNSWADIINRANLGMEVMHERNAHNFPLDLASVEAPSING.

An N-acetylthreonine modification is found at T2. A Phosphothreonine modification is found at T2. Helical transmembrane passes span 29–46 (YVGW…TAVS), 118–133 (HFFL…EWEL), and 142–156 (WIAV…AATA). H118 lines the chlorophyll a pocket. Pheophytin a is bound at residue Y126. 2 residues coordinate [CaMn4O5] cluster: D170 and E189. Residues 197–218 (FHMLGVAGVFGGSLFSAMHGSL) traverse the membrane as a helical segment. H198 contacts chlorophyll a. A quinone contacts are provided by residues H215 and 264-265 (SF). Fe cation is bound at residue H215. H272 is a Fe cation binding site. Residues 274–288 (FLAAWPVVGIWFTAL) traverse the membrane as a helical segment. The [CaMn4O5] cluster site is built by H332, E333, D342, and A344. The propeptide occupies 345 to 353 (SVEAPSING).

This sequence belongs to the reaction center PufL/M/PsbA/D family. As to quaternary structure, PSII is composed of 1 copy each of membrane proteins PsbA, PsbB, PsbC, PsbD, PsbE, PsbF, PsbH, PsbI, PsbJ, PsbK, PsbL, PsbM, PsbT, PsbX, PsbY, PsbZ, Psb30/Ycf12, at least 3 peripheral proteins of the oxygen-evolving complex and a large number of cofactors. It forms dimeric complexes. The cofactor is The D1/D2 heterodimer binds P680, chlorophylls that are the primary electron donor of PSII, and subsequent electron acceptors. It shares a non-heme iron and each subunit binds pheophytin, quinone, additional chlorophylls, carotenoids and lipids. D1 provides most of the ligands for the Mn4-Ca-O5 cluster of the oxygen-evolving complex (OEC). There is also a Cl(-1) ion associated with D1 and D2, which is required for oxygen evolution. The PSII complex binds additional chlorophylls, carotenoids and specific lipids.. Post-translationally, tyr-161 forms a radical intermediate that is referred to as redox-active TyrZ, YZ or Y-Z. C-terminally processed by CTPA; processing is essential to allow assembly of the oxygen-evolving complex and thus photosynthetic growth.

It localises to the plastid. The protein localises to the chloroplast thylakoid membrane. It catalyses the reaction 2 a plastoquinone + 4 hnu + 2 H2O = 2 a plastoquinol + O2. In terms of biological role, photosystem II (PSII) is a light-driven water:plastoquinone oxidoreductase that uses light energy to abstract electrons from H(2)O, generating O(2) and a proton gradient subsequently used for ATP formation. It consists of a core antenna complex that captures photons, and an electron transfer chain that converts photonic excitation into a charge separation. The D1/D2 (PsbA/PsbD) reaction center heterodimer binds P680, the primary electron donor of PSII as well as several subsequent electron acceptors. The chain is Photosystem II protein D1 from Tupiella akineta (Green alga).